Consider the following 126-residue polypeptide: Fluoride-specific ion channel FluC 2 (126 aa).

The next 4 membrane-spanning stretches (helical) occupy residues 7 to 27, 37 to 57, 65 to 85, and 101 to 121; these read MWVG…GLSI, LGTF…SILF, YGDL…TTFS, and AIAA…AAFG. Na(+)-binding residues include Gly-79 and Thr-82.

The protein belongs to the fluoride channel Fluc/FEX (TC 1.A.43) family.

The protein localises to the cell inner membrane. The catalysed reaction is fluoride(in) = fluoride(out). With respect to regulation, na(+) is not transported, but it plays an essential structural role and its presence is essential for fluoride channel function. In terms of biological role, fluoride-specific ion channel. Important for reducing fluoride concentration in the cell, thus reducing its toxicity. This Yersinia pseudotuberculosis serotype I (strain IP32953) protein is Fluoride-specific ion channel FluC 2.